Consider the following 510-residue polypeptide: Replication factor C large subunit (510 aa).

48 to 55 (GPPGTGKT) is a binding site for ATP. Residues 459-510 (MESMLERKREESEVEEEAKEIEEAVEKAEEEEEREEKKKEGGGEQRTLDAFF) are disordered. Basic and acidic residues predominate over residues 493–510 (EEKKKEGGGEQRTLDAFF).

The protein belongs to the activator 1 small subunits family. RfcL subfamily. As to quaternary structure, heteromultimer composed of small subunits (RfcS) and large subunits (RfcL).

Functionally, part of the RFC clamp loader complex which loads the PCNA sliding clamp onto DNA. The chain is Replication factor C large subunit from Methanopyrus kandleri (strain AV19 / DSM 6324 / JCM 9639 / NBRC 100938).